The sequence spans 152 residues: CASP-like protein 5B1 (152 aa).

Topologically, residues 1 to 11 are cytoplasmic; it reads MKKMIGSPGTM. A helical transmembrane segment spans residues 12-32; that stretch reads SGLILRLGQCATAAASIGVMV. Over 33–42 the chain is Extracellular; it reads SSYDFSNYTA. Residue N39 is glycosylated (N-linked (GlcNAc...) asparagine). The chain crosses the membrane as a helical span at residues 43–63; that stretch reads FCFLVASMGLQLIWSFGLACL. Over 64–77 the chain is Cytoplasmic; sequence DVYAIRRKSDLRSP. The chain crosses the membrane as a helical span at residues 78-98; the sequence is ILLSLFTVGDWVTALLALAAA. The Extracellular segment spans residues 99–131; it reads CSSAGVTVLFTKDTEFCRQQPALSCDRFQISVG. The helical transmembrane segment at 132 to 152 threads the bilayer; it reads LSFFNWFLAAISSHTMFWILI.

The protein belongs to the Casparian strip membrane proteins (CASP) family. In terms of assembly, homodimer and heterodimers. In terms of tissue distribution, expressed in leaves, exclusively in hair cells (e.g. differentiated trichomes and immature cells).

The protein localises to the cell membrane. The sequence is that of CASP-like protein 5B1 from Arabidopsis thaliana (Mouse-ear cress).